Consider the following 226-residue polypeptide: Cytidylate kinase (226 aa).

Residue 11-19 (GPAAAGKST) coordinates ATP.

It belongs to the cytidylate kinase family. Type 1 subfamily.

The protein resides in the cytoplasm. The catalysed reaction is CMP + ATP = CDP + ADP. It catalyses the reaction dCMP + ATP = dCDP + ADP. The sequence is that of Cytidylate kinase from Bacillus licheniformis (strain ATCC 14580 / DSM 13 / JCM 2505 / CCUG 7422 / NBRC 12200 / NCIMB 9375 / NCTC 10341 / NRRL NRS-1264 / Gibson 46).